The chain runs to 663 residues: Probable peptidyl-glycine alpha-amidating monooxygenase pamn-1 (663 aa).

Residues 1–21 form the signal peptide; it reads MNDRISINLIYLVLTFCCVSA. A peptidylglycine alpha-hydroxylating monooxygenase region spans residues 1-300; sequence MNDRISINLI…YDAKLDNPYP (300 aa). Cu(2+) contacts are provided by histidine 75 and histidine 76. A disulfide bridge links cysteine 82 with cysteine 98. Histidine 142 serves as a coordination point for Cu(2+). Asparagine 191 carries an N-linked (GlcNAc...) asparagine glycan. Intrachain disulfides connect cysteine 194-cysteine 305 and cysteine 261-cysteine 283. Cu(2+) contacts are provided by histidine 210 and histidine 212. Asparagine 269 is a glycosylation site (N-linked (GlcNAc...) asparagine). Residue methionine 282 coordinates Cu(2+). Positions 301-663 are peptidyl-alpha-hydroxyglycine alpha-amidating lyase; the sequence is QGAICAKDYP…WQFKIRHDQN (363 aa). Arginine 376 provides a ligand contact to a protein. Asparagine 411 carries N-linked (GlcNAc...) asparagine glycosylation. 4 NHL repeats span residues 411–454, 464–507, 511–554, and 626–656; these read NQTK…WKIE, SGEL…LDLN, IRQF…MTTQ, and FGQP…LWQF. Cysteines 478 and 497 form a disulfide. Residues tyrosine 496 and arginine 543 each contribute to the a protein site.

The protein in the C-terminal section; belongs to the peptidyl-alpha-hydroxyglycine alpha-amidating lyase family. This sequence in the N-terminal section; belongs to the copper type II ascorbate-dependent monooxygenase family. Monomer. It depends on Zn(2+) as a cofactor. Requires Cu(2+) as cofactor.

It localises to the secreted. It carries out the reaction a [peptide]-C-terminal glycine + 2 L-ascorbate + O2 = a [peptide]-C-terminal (2S)-2-hydroxyglycine + 2 monodehydro-L-ascorbate radical + H2O. The catalysed reaction is a [peptide]-C-terminal (2S)-2-hydroxyglycine = a [peptide]-C-terminal amide + glyoxylate. Probable bifunctional enzyme that catalyzes 2 sequential steps in C-terminal alpha-amidation of peptides. The monooxygenase part produces an unstable peptidyl(2-hydroxyglycine) intermediate that is dismutated to glyoxylate and the corresponding desglycine peptide amide by the lyase part. C-terminal amidation of peptides such as neuropeptides is essential for full biological activity. In Caenorhabditis elegans, this protein is Probable peptidyl-glycine alpha-amidating monooxygenase pamn-1.